The following is a 512-amino-acid chain: Cytochrome P450 26B1 (512 aa).

Position 441 (cysteine 441) interacts with heme.

It belongs to the cytochrome P450 family. It depends on heme as a cofactor.

It localises to the endoplasmic reticulum membrane. Its subcellular location is the microsome membrane. It catalyses the reaction all-trans-retinoate + reduced [NADPH--hemoprotein reductase] + O2 = all-trans-4-hydroxyretinoate + oxidized [NADPH--hemoprotein reductase] + H2O + H(+). The catalysed reaction is all-trans-retinoate + reduced [NADPH--hemoprotein reductase] + O2 = all-trans-18-hydroxyretinoate + oxidized [NADPH--hemoprotein reductase] + H2O + H(+). A cytochrome P450 monooxygenase involved in the metabolism of retinoates (RAs), the active metabolites of vitamin A, and critical signaling molecules in animals. RAs exist as at least four different isomers: all-trans-RA (atRA), 9-cis-RA, 13-cis-RA, and 9,13-dicis-RA, where atRA is considered to be the biologically active isomer, although 9-cis-RA and 13-cis-RA also have activity. Catalyzes the hydroxylation of atRA primarily at C-4 and C-18, thereby contributing to the regulation of atRA homeostasis and signaling. Hydroxylation of atRA limits its biological activity and initiates a degradative process leading to its eventual elimination. Involved in the convertion of atRA to all-trans-4-oxo-RA. Can oxidize all-trans-13,14-dihydroretinoate (DRA) to metabolites which could include all-trans-4-oxo-DRA, all-trans-4-hydroxy-DRA, all-trans-5,8-epoxy-DRA, and all-trans-18-hydroxy-DRA. Shows preference for the following substrates: atRA &gt; 9-cis-RA &gt; 13-cis-RA. Plays a central role in germ cell development: acts by degrading RAs in the developing testis, preventing STRA8 expression, thereby leading to delay of meiosis. Required for the maintenance of the undifferentiated state of male germ cells during embryonic development in Sertoli cells, inducing arrest in G0 phase of the cell cycle and preventing meiotic entry. Plays a role in skeletal development, both at the level of patterning and in the ossification of bone and the establishment of some synovial joints. Essential for postnatal survival. Functionally, also has a significant activity in oxidation of tazarotenic acid and may therefore metabolize that xenobiotic in vivo. The chain is Cytochrome P450 26B1 (CYP26B1) from Bos taurus (Bovine).